The primary structure comprises 348 residues: Ion-translocating oxidoreductase complex subunit D (348 aa).

Transmembrane regions (helical) follow at residues 15–35 (LTAK…GMQA), 36–56 (YFFG…AVAI), 67–87 (LTAF…LAMS), 88–108 (IPPY…LLLA), and 125–145 (VAYA…LVPI). Thr186 is modified (FMN phosphoryl threonine). A run of 5 helical transmembrane segments spans residues 212 to 232 (LFAN…LLLI), 241 to 261 (IPAA…LLLP), 265 to 285 (LNVV…FIAT), 298 to 318 (LIFG…GNYP), and 320 to 340 (AVAF…HYTQ).

It belongs to the NqrB/RnfD family. In terms of assembly, the complex is composed of six subunits: RnfA, RnfB, RnfC, RnfD, RnfE and RnfG. FMN is required as a cofactor.

The protein localises to the cell inner membrane. Part of a membrane-bound complex that couples electron transfer with translocation of ions across the membrane. The sequence is that of Ion-translocating oxidoreductase complex subunit D from Actinobacillus pleuropneumoniae serotype 7 (strain AP76).